An 826-amino-acid chain; its full sequence is Protein FAM171B (826 aa).

The N-terminal stretch at 1-32 is a signal peptide; the sequence is MARLCRRVPCTLLLGLAVVLLKARLVPAAARA. At 33–353 the chain is on the extracellular side; it reads ELSRSDLSLI…DSKDITAYHT (321 aa). Residues 52 to 71 are disordered; the sequence is QQQQQKQLEEAEEERTEVPG. Residues Asn-108, Asn-113, Asn-213, and Asn-268 are each glycosylated (N-linked (GlcNAc...) asparagine). Residues 354–374 traverse the membrane as a helical segment; the sequence is VFLTAILGGTIVIVIGFFAVL. Residues 375 to 826 lie on the Cytoplasmic side of the membrane; the sequence is LCYCRDKCGT…REERPLIPIN (452 aa). 3 disordered regions span residues 429-448, 474-493, and 774-826; these read NAKN…AETE, QNNY…GSKQ, and HPGE…IPIN. The span at 438–448 shows a compositional bias: basic and acidic residues; sequence QKKEPSKAETE. Polar residues predominate over residues 474 to 486; it reads QNNYSRNPTQSLE. Residues 774-786 are compositionally biased toward basic and acidic residues; that stretch reads HPGEESPGRKSTV. The residue at position 794 (Ser-794) is a Phosphoserine. The span at 805 to 826 shows a compositional bias: basic and acidic residues; sequence AKRDSKTNIWKKREERPLIPIN.

The protein belongs to the FAM171 family.

The protein localises to the cytoplasmic granule. It is found in the membrane. The protein is Protein FAM171B (FAM171B) of Homo sapiens (Human).